The sequence spans 370 residues: 3-isopropylmalate dehydrogenase (370 aa).

Gly-77–Glu-90 serves as a coordination point for NAD(+). Residues Arg-97, Arg-107, Arg-135, and Asp-226 each coordinate substrate. Residues Asp-226, Asp-250, and Asp-254 each contribute to the Mg(2+) site. Gly-290 to Asn-302 is an NAD(+) binding site.

It belongs to the isocitrate and isopropylmalate dehydrogenases family. LeuB type 1 subfamily. As to quaternary structure, homodimer. The cofactor is Mg(2+). Mn(2+) serves as cofactor.

It is found in the cytoplasm. It carries out the reaction (2R,3S)-3-isopropylmalate + NAD(+) = 4-methyl-2-oxopentanoate + CO2 + NADH. Its pathway is amino-acid biosynthesis; L-leucine biosynthesis; L-leucine from 3-methyl-2-oxobutanoate: step 3/4. Functionally, catalyzes the oxidation of 3-carboxy-2-hydroxy-4-methylpentanoate (3-isopropylmalate) to 3-carboxy-4-methyl-2-oxopentanoate. The product decarboxylates to 4-methyl-2 oxopentanoate. The polypeptide is 3-isopropylmalate dehydrogenase (leuB) (Agrobacterium fabrum (strain C58 / ATCC 33970) (Agrobacterium tumefaciens (strain C58))).